The chain runs to 436 residues: GTPase Der (436 aa).

2 EngA-type G domains span residues 4–167 and 175–351; these read PTIA…PNEY and IKFS…ESQN. Residues 10–17, 57–61, 119–122, 181–188, 229–233, and 294–297 each bind GTP; these read GRPNVGKS, DTGGI, NKVD, DTAGM, and NKWD. In terms of domain architecture, KH-like spans 352-436; it reads TRIPSAVLND…PIHLIARKRK (85 aa).

It belongs to the TRAFAC class TrmE-Era-EngA-EngB-Septin-like GTPase superfamily. EngA (Der) GTPase family. As to quaternary structure, associates with the 50S ribosomal subunit.

Its function is as follows. GTPase that plays an essential role in the late steps of ribosome biogenesis. The polypeptide is GTPase Der (Streptococcus pneumoniae (strain JJA)).